The primary structure comprises 185 residues: Translation initiation factor IF-3 (185 aa).

It belongs to the IF-3 family. As to quaternary structure, monomer.

Its subcellular location is the cytoplasm. In terms of biological role, IF-3 binds to the 30S ribosomal subunit and shifts the equilibrium between 70S ribosomes and their 50S and 30S subunits in favor of the free subunits, thus enhancing the availability of 30S subunits on which protein synthesis initiation begins. In Rickettsia prowazekii (strain Madrid E), this protein is Translation initiation factor IF-3.